Consider the following 85-residue polypeptide: Large ribosomal subunit protein bL27 (85 aa).

The disordered stretch occupies residues 1–22 (MAHKKAGGSTRNGRDSESKRLG).

This sequence belongs to the bacterial ribosomal protein bL27 family.

In Vibrio parahaemolyticus serotype O3:K6 (strain RIMD 2210633), this protein is Large ribosomal subunit protein bL27.